The chain runs to 488 residues: Probable malate:quinone oxidoreductase (488 aa).

Belongs to the MQO family. FAD is required as a cofactor.

It carries out the reaction (S)-malate + a quinone = a quinol + oxaloacetate. The protein operates within carbohydrate metabolism; tricarboxylic acid cycle; oxaloacetate from (S)-malate (quinone route): step 1/1. This Neisseria gonorrhoeae (strain ATCC 700825 / FA 1090) protein is Probable malate:quinone oxidoreductase.